Consider the following 285-residue polypeptide: Diphthine methyl ester synthase (285 aa).

S-adenosyl-L-methionine-binding positions include Leu-9, Asp-84, Gly-87, 112-113, and Leu-163; that span reads SI. At Ser-171 the chain carries Phosphoserine. The S-adenosyl-L-methionine site is built by Val-225 and His-250.

This sequence belongs to the diphthine synthase family.

It carries out the reaction 2-[(3S)-amino-3-carboxypropyl]-L-histidyl-[translation elongation factor 2] + 4 S-adenosyl-L-methionine = diphthine methyl ester-[translation elongation factor 2] + 4 S-adenosyl-L-homocysteine + 3 H(+). Its pathway is protein modification; peptidyl-diphthamide biosynthesis. S-adenosyl-L-methionine-dependent methyltransferase that catalyzes four methylations of the modified target histidine residue in translation elongation factor 2 (EF-2), to form an intermediate called diphthine methyl ester. The four successive methylation reactions represent the second step of diphthamide biosynthesis. This chain is Diphthine methyl ester synthase (DPH5), found in Homo sapiens (Human).